A 190-amino-acid polypeptide reads, in one-letter code: Adenylate kinase (190 aa).

12 to 17 contacts ATP; it reads GSGKTT. The interval 34–63 is NMP; sequence STGELLRAEVASGSERGKIIEGFTSKGNLV. AMP is bound by residues Thr35, Arg40, 61–63, 88–91, and Gln95; these read NLV and GYPR. The segment at 130–136 is LID; the sequence is GRARGAD. Residue Arg131 participates in ATP binding. AMP contacts are provided by Arg133 and Arg145. Arg173 serves as a coordination point for ATP.

This sequence belongs to the adenylate kinase family. In terms of assembly, monomer.

Its subcellular location is the cytoplasm. The enzyme catalyses AMP + ATP = 2 ADP. The protein operates within purine metabolism; AMP biosynthesis via salvage pathway; AMP from ADP: step 1/1. Functionally, catalyzes the reversible transfer of the terminal phosphate group between ATP and AMP. Plays an important role in cellular energy homeostasis and in adenine nucleotide metabolism. This Wolinella succinogenes (strain ATCC 29543 / DSM 1740 / CCUG 13145 / JCM 31913 / LMG 7466 / NCTC 11488 / FDC 602W) (Vibrio succinogenes) protein is Adenylate kinase.